Here is a 264-residue protein sequence, read N- to C-terminus: Acyl-[acyl-carrier-protein]--UDP-N-acetylglucosamine O-acyltransferase (264 aa).

The protein belongs to the transferase hexapeptide repeat family. LpxA subfamily. As to quaternary structure, homotrimer.

It localises to the cytoplasm. It carries out the reaction a (3R)-hydroxyacyl-[ACP] + UDP-N-acetyl-alpha-D-glucosamine = a UDP-3-O-[(3R)-3-hydroxyacyl]-N-acetyl-alpha-D-glucosamine + holo-[ACP]. It functions in the pathway glycolipid biosynthesis; lipid IV(A) biosynthesis; lipid IV(A) from (3R)-3-hydroxytetradecanoyl-[acyl-carrier-protein] and UDP-N-acetyl-alpha-D-glucosamine: step 1/6. Functionally, involved in the biosynthesis of lipid A, a phosphorylated glycolipid that anchors the lipopolysaccharide to the outer membrane of the cell. The sequence is that of Acyl-[acyl-carrier-protein]--UDP-N-acetylglucosamine O-acyltransferase from Rickettsia canadensis (strain McKiel).